The chain runs to 118 residues: Crustacean hyperglycemic hormones 2 (118 aa).

The first 22 residues, 1-22, serve as a signal peptide directing secretion; the sequence is MTAFRLVAVALVVVVACSTTWA. 3 cysteine pairs are disulfide-bonded: Cys51/Cys87, Cys67/Cys83, and Cys70/Cys96. Val116 is modified (valine amide).

It belongs to the arthropod CHH/MIH/GIH/VIH hormone family.

The protein localises to the secreted. Hormone found in the sinus gland of isopods and decapods which controls the blood sugar level. Has a secretagogue action over the amylase released from the midgut gland. May act as a stress hormone and may be involved in the control of molting and reproduction. The chain is Crustacean hyperglycemic hormones 2 (CHH2) from Penaeus monodon (Giant tiger prawn).